Consider the following 273-residue polypeptide: 4-hydroxy-tetrahydrodipicolinate reductase (273 aa).

NAD(+)-binding positions include 12 to 17 (GAGGRM) and glutamate 38. NADP(+) is bound at residue arginine 39. Residues 102–104 (GTT) and 126–129 (AANF) contribute to the NAD(+) site. The Proton donor/acceptor role is filled by histidine 159. (S)-2,3,4,5-tetrahydrodipicolinate is bound at residue histidine 160. The active-site Proton donor is the lysine 163. 169–170 (GT) is a (S)-2,3,4,5-tetrahydrodipicolinate binding site.

It belongs to the DapB family. In terms of assembly, homotetramer.

It is found in the cytoplasm. It catalyses the reaction (S)-2,3,4,5-tetrahydrodipicolinate + NAD(+) + H2O = (2S,4S)-4-hydroxy-2,3,4,5-tetrahydrodipicolinate + NADH + H(+). The catalysed reaction is (S)-2,3,4,5-tetrahydrodipicolinate + NADP(+) + H2O = (2S,4S)-4-hydroxy-2,3,4,5-tetrahydrodipicolinate + NADPH + H(+). The protein operates within amino-acid biosynthesis; L-lysine biosynthesis via DAP pathway; (S)-tetrahydrodipicolinate from L-aspartate: step 4/4. Functionally, catalyzes the conversion of 4-hydroxy-tetrahydrodipicolinate (HTPA) to tetrahydrodipicolinate. The polypeptide is 4-hydroxy-tetrahydrodipicolinate reductase (Salmonella arizonae (strain ATCC BAA-731 / CDC346-86 / RSK2980)).